The primary structure comprises 304 residues: Ribosomal RNA small subunit methyltransferase H (304 aa).

S-adenosyl-L-methionine-binding positions include 47–49 (GGH), aspartate 66, phenylalanine 93, aspartate 108, and glutamine 115.

This sequence belongs to the methyltransferase superfamily. RsmH family.

It is found in the cytoplasm. It carries out the reaction cytidine(1402) in 16S rRNA + S-adenosyl-L-methionine = N(4)-methylcytidine(1402) in 16S rRNA + S-adenosyl-L-homocysteine + H(+). In terms of biological role, specifically methylates the N4 position of cytidine in position 1402 (C1402) of 16S rRNA. This is Ribosomal RNA small subunit methyltransferase H from Prochlorococcus marinus (strain NATL1A).